We begin with the raw amino-acid sequence, 212 residues long: Fe/S biogenesis protein NfuA (212 aa).

[4Fe-4S] cluster-binding residues include Cys169 and Cys172.

Belongs to the NfuA family. As to quaternary structure, homodimer. Requires [4Fe-4S] cluster as cofactor.

Involved in iron-sulfur cluster biogenesis. Binds a 4Fe-4S cluster, can transfer this cluster to apoproteins, and thereby intervenes in the maturation of Fe/S proteins. Could also act as a scaffold/chaperone for damaged Fe/S proteins. The chain is Fe/S biogenesis protein NfuA from Acinetobacter baumannii (strain AB307-0294).